The sequence spans 109 residues: Putative glutaredoxin-C11 (109 aa).

The region spanning Ala2 to Trp108 is the Glutaredoxin domain. Cys22 and Cys25 are joined by a disulfide. Residues Ala106–Leu109 carry the Responsive for interaction with TGA factors motif.

Belongs to the glutaredoxin family. CC-type subfamily.

Its subcellular location is the cytoplasm. The protein resides in the nucleus. Its function is as follows. Has a glutathione-disulfide oxidoreductase activity in the presence of NADPH and glutathione reductase. Reduces low molecular weight disulfides and proteins. In Oryza sativa subsp. japonica (Rice), this protein is Putative glutaredoxin-C11 (GRXC11).